The following is a 216-amino-acid chain: GTP cyclohydrolase-2 (216 aa).

A GTP-binding site is contributed by 51-55; the sequence is RIHSE. The Zn(2+) site is built by cysteine 56, cysteine 67, and cysteine 69. Residues glutamine 72, 94 to 96, and threonine 116 contribute to the GTP site; that span reads EGR. Aspartate 128 acts as the Proton acceptor in catalysis. Catalysis depends on arginine 130, which acts as the Nucleophile. 2 residues coordinate GTP: threonine 151 and lysine 156.

Belongs to the GTP cyclohydrolase II family. Requires Zn(2+) as cofactor.

It carries out the reaction GTP + 4 H2O = 2,5-diamino-6-hydroxy-4-(5-phosphoribosylamino)-pyrimidine + formate + 2 phosphate + 3 H(+). Its pathway is cofactor biosynthesis; riboflavin biosynthesis; 5-amino-6-(D-ribitylamino)uracil from GTP: step 1/4. In terms of biological role, catalyzes the conversion of GTP to 2,5-diamino-6-ribosylamino-4(3H)-pyrimidinone 5'-phosphate (DARP), formate and pyrophosphate. The sequence is that of GTP cyclohydrolase-2 from Haemophilus influenzae (strain 86-028NP).